The sequence spans 101 residues: Urease subunit beta (101 aa).

Belongs to the urease beta subunit family. As to quaternary structure, heterotrimer of UreA (gamma), UreB (beta) and UreC (alpha) subunits. Three heterotrimers associate to form the active enzyme.

The protein resides in the cytoplasm. The catalysed reaction is urea + 2 H2O + H(+) = hydrogencarbonate + 2 NH4(+). Its pathway is nitrogen metabolism; urea degradation; CO(2) and NH(3) from urea (urease route): step 1/1. In Pseudomonas aeruginosa (strain LESB58), this protein is Urease subunit beta.